The sequence spans 135 residues: MTLDVSIIIPERVFWEKRVEEIILPTLSGQMGVLKDHIPILTGLDIGIILVRQKSSSDWTSLVVTGGFALINSNNVTILVNEAEFGSEINVEQAQISYNSSKHALEMNKDIKRKFELTLNLKKARARFQVTQLKK.

It belongs to the ATPase epsilon chain family. As to quaternary structure, F-type ATPases have 2 components, CF(1) - the catalytic core - and CF(0) - the membrane proton channel. CF(1) has five subunits: alpha(3), beta(3), gamma(1), delta(1), epsilon(1). CF(0) has three main subunits: a, b and c.

Its subcellular location is the plastid. The protein resides in the chloroplast thylakoid membrane. Functionally, produces ATP from ADP in the presence of a proton gradient across the membrane. The polypeptide is ATP synthase epsilon chain, chloroplastic (Euglena gracilis).